The sequence spans 140 residues: Lipoprotein MlpG (140 aa).

An N-terminal signal peptide occupies residues methionine 1–glycine 17. Cysteine 18 carries the N-palmitoyl cysteine lipid modification. Cysteine 18 is lipidated: S-diacylglycerol cysteine. Residues aspartate 22 to glutamate 57 form a disordered region. The segment covering lysine 33 to glutamate 57 has biased composition (basic and acidic residues).

It belongs to the Multicopy lipoprotein (Mlp) family.

It is found in the cell outer membrane. In terms of biological role, an outer membrane protein that may participate in pathogenesis. Some human Lyme disease patients have antibodies against this protein. The Mlp proteins probably undergo intragenic recombination, generating new alleles. The chain is Lipoprotein MlpG from Borreliella burgdorferi (strain ATCC 35210 / DSM 4680 / CIP 102532 / B31) (Borrelia burgdorferi).